The primary structure comprises 553 residues: Mucolipin-3 (553 aa).

Residues 1–62 are Cytoplasmic-facing; that stretch reads MADPEVVVSS…FWARGRKPWK (62 aa). The interaction with phosphoinositides stretch occupies residues 52 to 62; the sequence is KFWARGRKPWK. A helical transmembrane segment spans residues 63–83; it reads LAIQILKIAMVTIQLVLFGLS. Topologically, residues 84 to 283 are extracellular; the sequence is NQMVVAFKEE…VSGSIQKNTH (200 aa). An extracellular/lumenal pore loop region spans residues 104 to 118; that stretch reads KGYMDRMDDTYAVYT. Asparagine 138, asparagine 172, and asparagine 205 each carry an N-linked (GlcNAc...) asparagine glycan. Cysteine 159 and cysteine 185 are oxidised to a cystine. An intrachain disulfide couples cysteine 238 to cysteine 269. A helical membrane pass occupies residues 284-304; it reads YMMIFDAFVILTCLVSLILCI. Over 305-341 the chain is Cytoplasmic; the sequence is RSVIRGLQLQQEFVNFFLLHYKKEVSVSDQMEFVNGW. A helical membrane pass occupies residues 342 to 362; sequence YIMIIISDILTIIGSILKMEI. Residues 363-371 lie on the Extracellular side of the membrane; it reads QAKSLTSYD. A helical transmembrane segment spans residues 372-392; sequence VCSILLGTSTMLVWLGVIRYL. Topologically, residues 393–414 are cytoplasmic; sequence GFFAKYNLLILTLQAALPNVIR. The helical transmembrane segment at 415 to 435 threads the bilayer; it reads FCCCAAMIYLGYCFCGWIVLG. Over 436–443 the chain is Extracellular; sequence PYHDKFRS. Residues 444–464 constitute an intramembrane region (pore-forming); sequence LNMVSECLFSLINGDDMFATF. Residues 456 to 459 carry the Selectivity filter motif; it reads NGDD. The Extracellular portion of the chain corresponds to 465–475; it reads AKMQQKSYLVW. A helical membrane pass occupies residues 476-497; it reads LFSRIYLYSFISLFIYMILSLF. Residues 498-553 lie on the Cytoplasmic side of the membrane; it reads IALITDTYETIKQYQQDGFPETELRTFISECKDLPNSGKYRLEDDPPVSLFCCCKK.

The protein belongs to the transient receptor (TC 1.A.4) family. Polycystin subfamily. MCOLN3 sub-subfamily. As to quaternary structure, homotetramer. Can heterooligomerize with MCOLN1; heteromeric assemblies have different channel properties as compared to the respective homooligomers and may be tissue-specific. May heterooligomerize with TRPV5 to form a functional distinct ion channel. Interacts with GABARAPL2. In terms of processing, N-glycosylated.

The protein resides in the cell membrane. The protein localises to the early endosome membrane. Its subcellular location is the late endosome membrane. It is found in the lysosome membrane. It localises to the cytoplasmic vesicle. The protein resides in the autophagosome membrane. The enzyme catalyses Ca(2+)(in) = Ca(2+)(out). It catalyses the reaction K(+)(in) = K(+)(out). It carries out the reaction Na(+)(in) = Na(+)(out). With respect to regulation, channel activity is activated by PtdIns(3,5)P2 (phosphatidylinositol 3,5-bisphosphate). Inhibited by lumenal H(+) and Na(+). The channel pore shows dynamic behavior and undergoes spontaneous, Ca(2+)-dependent modulation when conducting Ca(2+). Nonselective cation channel probably playing a role in the regulation of membrane trafficking events. Acts as a Ca(2+)-permeable cation channel with inwardly rectifying activity. Mediates release of Ca(2+) from endosomes to the cytoplasm, contributes to endosomal acidification and is involved in the regulation of membrane trafficking and fusion in the endosomal pathway. Also permeable to Mg(2+), Na(+) and K(+). Does not seem to act as mechanosensory transduction channel in inner ear sensory hair cells. Proposed to play a critical role at the cochlear stereocilia ankle-link region during hair-bundle growth. Involved in the regulation of autophagy. Through association with GABARAPL2 may be involved in autophagosome formation possibly providing Ca(2+) for the fusion process. Through a possible and probably tissue-specific heteromerization with MCOLN1 may be at least in part involved in many lysosome-dependent cellular events. Possible heteromeric ion channel assemblies with TRPV5 show pharmacological similarity with TRPML3. The sequence is that of Mucolipin-3 (MCOLN3) from Homo sapiens (Human).